Here is a 187-residue protein sequence, read N- to C-terminus: Elongation factor P (187 aa).

The protein belongs to the elongation factor P family.

Its subcellular location is the cytoplasm. It functions in the pathway protein biosynthesis; polypeptide chain elongation. In terms of biological role, involved in peptide bond synthesis. Stimulates efficient translation and peptide-bond synthesis on native or reconstituted 70S ribosomes in vitro. Probably functions indirectly by altering the affinity of the ribosome for aminoacyl-tRNA, thus increasing their reactivity as acceptors for peptidyl transferase. The protein is Elongation factor P of Sphingopyxis alaskensis (strain DSM 13593 / LMG 18877 / RB2256) (Sphingomonas alaskensis).